The following is a 166-amino-acid chain: SsrA-binding protein (166 aa).

Positions H143–R166 are disordered. Residues D144–K159 are compositionally biased toward basic and acidic residues.

The protein belongs to the SmpB family.

The protein localises to the cytoplasm. In terms of biological role, required for rescue of stalled ribosomes mediated by trans-translation. Binds to transfer-messenger RNA (tmRNA), required for stable association of tmRNA with ribosomes. tmRNA and SmpB together mimic tRNA shape, replacing the anticodon stem-loop with SmpB. tmRNA is encoded by the ssrA gene; the 2 termini fold to resemble tRNA(Ala) and it encodes a 'tag peptide', a short internal open reading frame. During trans-translation Ala-aminoacylated tmRNA acts like a tRNA, entering the A-site of stalled ribosomes, displacing the stalled mRNA. The ribosome then switches to translate the ORF on the tmRNA; the nascent peptide is terminated with the 'tag peptide' encoded by the tmRNA and targeted for degradation. The ribosome is freed to recommence translation, which seems to be the essential function of trans-translation. In Prochlorococcus marinus (strain MIT 9211), this protein is SsrA-binding protein.